The following is a 331-amino-acid chain: Nucleotide-binding protein SGR_5570 (331 aa).

The disordered stretch occupies residues M1 to G43. G55–S62 is a binding site for ATP. D106–G109 contributes to the GTP binding site.

It belongs to the RapZ-like family.

In terms of biological role, displays ATPase and GTPase activities. The chain is Nucleotide-binding protein SGR_5570 from Streptomyces griseus subsp. griseus (strain JCM 4626 / CBS 651.72 / NBRC 13350 / KCC S-0626 / ISP 5235).